The sequence spans 389 residues: S-adenosylmethionine synthase (389 aa).

An ATP-binding site is contributed by His-15. Asp-17 serves as a coordination point for Mg(2+). Residue Glu-43 coordinates K(+). Residues Glu-56 and Gln-99 each coordinate L-methionine. The segment at 99–109 (QSPDIAQGVNE) is flexible loop. Residues 166 to 168 (DAK), 234 to 235 (RF), Asp-243, 249 to 250 (RK), Ala-266, and Lys-270 contribute to the ATP site. Residue Asp-243 participates in L-methionine binding. Lys-274 lines the L-methionine pocket.

It belongs to the AdoMet synthase family. Homotetramer; dimer of dimers. It depends on Mg(2+) as a cofactor. K(+) is required as a cofactor.

It localises to the cytoplasm. It carries out the reaction L-methionine + ATP + H2O = S-adenosyl-L-methionine + phosphate + diphosphate. Its pathway is amino-acid biosynthesis; S-adenosyl-L-methionine biosynthesis; S-adenosyl-L-methionine from L-methionine: step 1/1. Its function is as follows. Catalyzes the formation of S-adenosylmethionine (AdoMet) from methionine and ATP. The overall synthetic reaction is composed of two sequential steps, AdoMet formation and the subsequent tripolyphosphate hydrolysis which occurs prior to release of AdoMet from the enzyme. The sequence is that of S-adenosylmethionine synthase from Neisseria meningitidis serogroup A / serotype 4A (strain DSM 15465 / Z2491).